The primary structure comprises 371 residues: Queuine tRNA-ribosyltransferase (371 aa).

Asp89 (proton acceptor) is an active-site residue. Residues 89-93 (DSGGF), Asp143, Gln185, and Gly212 contribute to the substrate site. Residues 243–249 (GVGKPED) form an RNA binding region. Asp262 (nucleophile) is an active-site residue. Positions 267 to 271 (TRNAR) are RNA binding; important for wobble base 34 recognition. Residues Cys300, Cys302, Cys305, and His331 each coordinate Zn(2+).

The protein belongs to the queuine tRNA-ribosyltransferase family. As to quaternary structure, homodimer. Within each dimer, one monomer is responsible for RNA recognition and catalysis, while the other monomer binds to the replacement base PreQ1. Requires Zn(2+) as cofactor.

The enzyme catalyses 7-aminomethyl-7-carbaguanine + guanosine(34) in tRNA = 7-aminomethyl-7-carbaguanosine(34) in tRNA + guanine. It participates in tRNA modification; tRNA-queuosine biosynthesis. Its function is as follows. Catalyzes the base-exchange of a guanine (G) residue with the queuine precursor 7-aminomethyl-7-deazaguanine (PreQ1) at position 34 (anticodon wobble position) in tRNAs with GU(N) anticodons (tRNA-Asp, -Asn, -His and -Tyr). Catalysis occurs through a double-displacement mechanism. The nucleophile active site attacks the C1' of nucleotide 34 to detach the guanine base from the RNA, forming a covalent enzyme-RNA intermediate. The proton acceptor active site deprotonates the incoming PreQ1, allowing a nucleophilic attack on the C1' of the ribose to form the product. After dissociation, two additional enzymatic reactions on the tRNA convert PreQ1 to queuine (Q), resulting in the hypermodified nucleoside queuosine (7-(((4,5-cis-dihydroxy-2-cyclopenten-1-yl)amino)methyl)-7-deazaguanosine). In Thioalkalivibrio sulfidiphilus (strain HL-EbGR7), this protein is Queuine tRNA-ribosyltransferase.